The sequence spans 169 residues: Peptide methionine sulfoxide reductase MsrA (169 aa).

Cys10 is an active-site residue.

Belongs to the MsrA Met sulfoxide reductase family.

It catalyses the reaction L-methionyl-[protein] + [thioredoxin]-disulfide + H2O = L-methionyl-(S)-S-oxide-[protein] + [thioredoxin]-dithiol. The enzyme catalyses [thioredoxin]-disulfide + L-methionine + H2O = L-methionine (S)-S-oxide + [thioredoxin]-dithiol. Functionally, has an important function as a repair enzyme for proteins that have been inactivated by oxidation. Catalyzes the reversible oxidation-reduction of methionine sulfoxide in proteins to methionine. The chain is Peptide methionine sulfoxide reductase MsrA from Streptococcus equi subsp. zooepidemicus (strain H70).